The primary structure comprises 557 residues: Trigger factor (557 aa).

Residues 169–255 (GDVVVIDFQA…LKEIKTKELP (87 aa)) form the PPIase FKBP-type domain. Residues 438 to 557 (WVDSEGNPTE…KAGKKSKKDK (120 aa)) are disordered. Over residues 455 to 466 (SEGEDRQERSES) the composition is skewed to basic and acidic residues.

Belongs to the FKBP-type PPIase family. Tig subfamily.

Its subcellular location is the cytoplasm. It carries out the reaction [protein]-peptidylproline (omega=180) = [protein]-peptidylproline (omega=0). Involved in protein export. Acts as a chaperone by maintaining the newly synthesized protein in an open conformation. Functions as a peptidyl-prolyl cis-trans isomerase. The chain is Trigger factor from Synechococcus sp. (strain JA-3-3Ab) (Cyanobacteria bacterium Yellowstone A-Prime).